A 2138-amino-acid chain; its full sequence is DNA polymerase epsilon catalytic subunit B (2138 aa).

Residues 1224–1231 (EKRKWKMT) carry the Nuclear localization signal 1 motif. Zn(2+) is bound by residues Cys2015, Cys2018, Cys2040, and Cys2045. A CysA-type zinc finger spans residues 2015–2045 (CSNCGAYRDLDFCRDSALLTEKEWSCADPQC). [4Fe-4S] cluster contacts are provided by Cys2076, Cys2079, Cys2091, and Cys2093. Residues 2076–2093 (CNRCNQVKAAHLTEQCEC) carry the CysB motif motif. The Nuclear localization signal 2 signature appears at 2107-2114 (HKRIEIFL).

This sequence belongs to the DNA polymerase type-B family. In terms of assembly, heterotetramer. It depends on [4Fe-4S] cluster as a cofactor. In terms of tissue distribution, mostly expressed at low levels in inflorescence (floral meristem and flowers until anthesis), and, to a lower extent, in seeds.

It localises to the nucleus. It carries out the reaction DNA(n) + a 2'-deoxyribonucleoside 5'-triphosphate = DNA(n+1) + diphosphate. Functionally, DNA polymerase II, which participates in chromosomal DNA replication. Involved in the determination of cell fate during plant embryogenesis. Contributes to the flowering time repression. The chain is DNA polymerase epsilon catalytic subunit B (POL2B) from Arabidopsis thaliana (Mouse-ear cress).